A 190-amino-acid chain; its full sequence is Putative triphosphatase YjbK (190 aa).

The 186-residue stretch at 4–189 (EIEIEFKNML…LRFYEEKRKS (186 aa)) folds into the CYTH domain.

The chain is Putative triphosphatase YjbK (yjbK) from Bacillus subtilis (strain 168).